The primary structure comprises 239 residues: tRNA (guanine-N(7)-)-methyltransferase (239 aa).

S-adenosyl-L-methionine-binding positions include G64, 87 to 88 (EI), 120 to 121 (NA), and L140. D143 is a catalytic residue. Residue 218 to 220 (SEE) coordinates S-adenosyl-L-methionine.

It belongs to the class I-like SAM-binding methyltransferase superfamily. TrmB family.

The protein resides in the nucleus. The enzyme catalyses guanosine(46) in tRNA + S-adenosyl-L-methionine = N(7)-methylguanosine(46) in tRNA + S-adenosyl-L-homocysteine. The protein operates within tRNA modification; N(7)-methylguanine-tRNA biosynthesis. Catalyzes the formation of N(7)-methylguanine at position 46 (m7G46) in tRNA. The polypeptide is tRNA (guanine-N(7)-)-methyltransferase (Culex quinquefasciatus (Southern house mosquito)).